Consider the following 476-residue polypeptide: Aspartyl/glutamyl-tRNA(Asn/Gln) amidotransferase subunit B (476 aa).

Belongs to the GatB/GatE family. GatB subfamily. Heterotrimer of A, B and C subunits.

It carries out the reaction L-glutamyl-tRNA(Gln) + L-glutamine + ATP + H2O = L-glutaminyl-tRNA(Gln) + L-glutamate + ADP + phosphate + H(+). The catalysed reaction is L-aspartyl-tRNA(Asn) + L-glutamine + ATP + H2O = L-asparaginyl-tRNA(Asn) + L-glutamate + ADP + phosphate + 2 H(+). In terms of biological role, allows the formation of correctly charged Asn-tRNA(Asn) or Gln-tRNA(Gln) through the transamidation of misacylated Asp-tRNA(Asn) or Glu-tRNA(Gln) in organisms which lack either or both of asparaginyl-tRNA or glutaminyl-tRNA synthetases. The reaction takes place in the presence of glutamine and ATP through an activated phospho-Asp-tRNA(Asn) or phospho-Glu-tRNA(Gln). The polypeptide is Aspartyl/glutamyl-tRNA(Asn/Gln) amidotransferase subunit B (Geobacillus kaustophilus (strain HTA426)).